Here is a 166-residue protein sequence, read N- to C-terminus: Crossover junction endodeoxyribonuclease RuvC (166 aa).

Active-site residues include aspartate 7, glutamate 68, and aspartate 141. Mg(2+) contacts are provided by aspartate 7, glutamate 68, and aspartate 141.

The protein belongs to the RuvC family. As to quaternary structure, homodimer which binds Holliday junction (HJ) DNA. The HJ becomes 2-fold symmetrical on binding to RuvC with unstacked arms; it has a different conformation from HJ DNA in complex with RuvA. In the full resolvosome a probable DNA-RuvA(4)-RuvB(12)-RuvC(2) complex forms which resolves the HJ. It depends on Mg(2+) as a cofactor.

It localises to the cytoplasm. It carries out the reaction Endonucleolytic cleavage at a junction such as a reciprocal single-stranded crossover between two homologous DNA duplexes (Holliday junction).. The RuvA-RuvB-RuvC complex processes Holliday junction (HJ) DNA during genetic recombination and DNA repair. Endonuclease that resolves HJ intermediates. Cleaves cruciform DNA by making single-stranded nicks across the HJ at symmetrical positions within the homologous arms, yielding a 5'-phosphate and a 3'-hydroxyl group; requires a central core of homology in the junction. The consensus cleavage sequence is 5'-(A/T)TT(C/G)-3'. Cleavage occurs on the 3'-side of the TT dinucleotide at the point of strand exchange. HJ branch migration catalyzed by RuvA-RuvB allows RuvC to scan DNA until it finds its consensus sequence, where it cleaves and resolves the cruciform DNA. This chain is Crossover junction endodeoxyribonuclease RuvC, found in Caldicellulosiruptor saccharolyticus (strain ATCC 43494 / DSM 8903 / Tp8T 6331).